The sequence spans 616 residues: Glycogenin-1 (616 aa).

Residues L10, Y16, and R95 each contribute to the UDP site. L10, Y16, R95, K104, D120, D122, N158, S159, D185, D188, and Q189 together coordinate UDP-alpha-D-glucose. Residues D120 and D122 each coordinate UDP. Mn(2+) is bound by residues D120 and D122. An O-linked (Glc...) tyrosine glycan is attached at Y230. Positions 247, 250, and 253 each coordinate UDP. Residue H247 coordinates Mn(2+). Positions 250 and 253 each coordinate UDP-alpha-D-glucose. A compositionally biased stretch (basic and acidic residues) spans 283 to 302 (HQLNNEVSKPKISDSDKTET). Disordered regions lie at residues 283 to 320 (HQLN…PTTN), 335 to 354 (NQNA…NPVP), and 371 to 516 (TNQP…SVDD). Residues 377–386 (ESREYSKEND) are compositionally biased toward basic and acidic residues. Polar residues predominate over residues 400–419 (SPPNSTQEPNSSYSVVSTQA). Residues 450–461 (STAASSNNNVSN) are compositionally biased toward low complexity. Composition is skewed to polar residues over residues 462–485 (QPDN…PSNP) and 492–503 (DNIQKPSVSTND). A glycan (O-linked (Glc...) tyrosine) is linked at Y598.

The protein belongs to the glycosyltransferase 8 family. Glycogenin subfamily. Mn(2+) is required as a cofactor.

The protein resides in the cytoplasm. It is found in the vacuole. It catalyses the reaction L-tyrosyl-[glycogenin] + UDP-alpha-D-glucose = alpha-D-glucosyl-L-tyrosyl-[glycogenin] + UDP + H(+). It carries out the reaction [1,4-alpha-D-glucosyl](n)-L-tyrosyl-[glycogenin] + UDP-alpha-D-glucose = [1,4-alpha-D-glucosyl](n+1)-L-tyrosyl-[glycogenin] + UDP + H(+). Functionally, self-glucosylating initiator of glycogen synthesis. It catalyzes the formation of a short alpha (1,4)-glucosyl chain covalently attached via a glucose 1-O-tyrosyl linkage to internal tyrosine residues and these chains act as primers for the elongation reaction catalyzed by glycogen synthase. Capable of transferring glucosyl residues to unbound acceptors such as free oligoglucans or oligoglucan derivatives. This Saccharomyces cerevisiae (strain YJM789) (Baker's yeast) protein is Glycogenin-1 (GLG1).